The primary structure comprises 358 residues: UDP-N-acetylglucosamine--N-acetylmuramyl-(pentapeptide) pyrophosphoryl-undecaprenol N-acetylglucosamine transferase (358 aa).

UDP-N-acetyl-alpha-D-glucosamine is bound by residues 11–13, Asn120, Arg161, Ser188, and Gln282; that span reads TGG.

It belongs to the glycosyltransferase 28 family. MurG subfamily.

It is found in the cell inner membrane. The catalysed reaction is di-trans,octa-cis-undecaprenyl diphospho-N-acetyl-alpha-D-muramoyl-L-alanyl-D-glutamyl-meso-2,6-diaminopimeloyl-D-alanyl-D-alanine + UDP-N-acetyl-alpha-D-glucosamine = di-trans,octa-cis-undecaprenyl diphospho-[N-acetyl-alpha-D-glucosaminyl-(1-&gt;4)]-N-acetyl-alpha-D-muramoyl-L-alanyl-D-glutamyl-meso-2,6-diaminopimeloyl-D-alanyl-D-alanine + UDP + H(+). Its pathway is cell wall biogenesis; peptidoglycan biosynthesis. In terms of biological role, cell wall formation. Catalyzes the transfer of a GlcNAc subunit on undecaprenyl-pyrophosphoryl-MurNAc-pentapeptide (lipid intermediate I) to form undecaprenyl-pyrophosphoryl-MurNAc-(pentapeptide)GlcNAc (lipid intermediate II). The polypeptide is UDP-N-acetylglucosamine--N-acetylmuramyl-(pentapeptide) pyrophosphoryl-undecaprenol N-acetylglucosamine transferase (Synechococcus sp. (strain WH7803)).